A 124-amino-acid chain; its full sequence is Large ribosomal subunit protein uL18 (124 aa).

This sequence belongs to the universal ribosomal protein uL18 family. As to quaternary structure, part of the 50S ribosomal subunit; part of the 5S rRNA/L5/L18/L25 subcomplex. Contacts the 5S and 23S rRNAs.

This is one of the proteins that bind and probably mediate the attachment of the 5S RNA into the large ribosomal subunit, where it forms part of the central protuberance. The sequence is that of Large ribosomal subunit protein uL18 from Caldicellulosiruptor saccharolyticus (strain ATCC 43494 / DSM 8903 / Tp8T 6331).